We begin with the raw amino-acid sequence, 189 residues long: MKQFFEFIPLIIFFVVFKTTDIYIATGALIVSMGLMLAFNYYKDGKVEKMQVITFGMVLVFGTLTIVLHDDVFIKWKVTVVYALFSLALLVSQFFYKKPIIKQMLSKEINLPANIWNNLNMAWALLFAVLSAVNVYVAFSLSQETWVNFKVFGLLAITLAFTLLSGLYIYKYLPATAEKKISANKNPEE.

Transmembrane regions (helical) follow at residues 4 to 24 (FFEF…DIYI), 53 to 73 (ITFG…DDVF), 76 to 96 (WKVT…QFFY), 121 to 141 (MAWA…AFSL), and 149 to 169 (FKVF…GLYI).

The protein belongs to the YciB family.

It is found in the cell inner membrane. Functionally, plays a role in cell envelope biogenesis, maintenance of cell envelope integrity and membrane homeostasis. This chain is Inner membrane-spanning protein YciB, found in Psychromonas ingrahamii (strain DSM 17664 / CCUG 51855 / 37).